The primary structure comprises 286 residues: Uridylate cyclase (286 aa).

Residues 90 to 223 enclose the Guanylate cyclase domain; the sequence is TAIFVDIRKS…DAVTKAANMS (134 aa). Phenylalanine 93 is a binding site for a ribonucleoside 5'-triphosphate. 3 residues coordinate Mn(2+): aspartate 95, isoleucine 96, and aspartate 140.

This sequence belongs to the adenylyl cyclase class-4/guanylyl cyclase family. Pyrimidine cyclase subfamily. Homodimer. It depends on Mn(2+) as a cofactor.

It is found in the cytoplasm. The catalysed reaction is UTP = 3',5'-cyclic UMP + diphosphate. Pycsar (pyrimidine cyclase system for antiphage resistance) provides immunity against bacteriophage. The pyrimidine cyclase (PycC) synthesizes cyclic nucleotides in response to infection; these serve as specific second messenger signals. The signals activate the adjacent effector, leading to bacterial cell death and abortive phage infection. A clade C Pycsar system. Its function is as follows. The pyrimidine cyclase gene of a two-gene Pycsar system, weakly generates cyclic UMP (cUMP) from UTP, has little to no activity on ATP, CTP or GTP. Expression of this and adjacent effector TpPycTM (AC A0A1T4LJG1) probably confers resistance to bacteriophage. The genes are probably only expressed in response to bacteriophage infection. The sequence is that of Uridylate cyclase from Treponema porcinum.